Here is a 293-residue protein sequence, read N- to C-terminus: Foldase protein PrsA 2 (293 aa).

An N-terminal signal peptide occupies residues 1-20; it reads MKKKLILGLVMMMALFSLAA. C21 carries N-palmitoyl cysteine lipidation. C21 carries S-diacylglycerol cysteine lipidation. The 92-residue stretch at 135-226 folds into the PpiC domain; the sequence is QPDITVSHIL…YGYHIIQMDK (92 aa).

It belongs to the PrsA family.

Its subcellular location is the cell membrane. It carries out the reaction [protein]-peptidylproline (omega=180) = [protein]-peptidylproline (omega=0). Functionally, plays a major role in protein secretion by helping the post-translocational extracellular folding of several secreted proteins. The chain is Foldase protein PrsA 2 (prsA2) from Listeria monocytogenes serovar 1/2a (strain ATCC BAA-679 / EGD-e).